The chain runs to 25 residues: uncharacterized protein (25 aa).

It is found in the plastid. The protein resides in the chloroplast. This is an uncharacterized protein from Trieres chinensis (Marine centric diatom).